Consider the following 318-residue polypeptide: Elongator complex protein 5 (318 aa).

At S270 the chain carries Phosphoserine.

Belongs to the ELP5 family. As to quaternary structure, component of the elongator complex which consists of ELP1, ELP2, ELP3, ELP4, ELP5 and ELP6; in the complex, is required for optimal binding of ELP3 to ELP4. Tyrosine-phosphorylated.

Its subcellular location is the nucleus. The protein resides in the cytoplasm. The protein operates within tRNA modification; 5-methoxycarbonylmethyl-2-thiouridine-tRNA biosynthesis. In terms of biological role, component of the elongator complex which is required for multiple tRNA modifications, including mcm5U (5-methoxycarbonylmethyl uridine), mcm5s2U (5-methoxycarbonylmethyl-2-thiouridine), and ncm5U (5-carbamoylmethyl uridine). The elongator complex catalyzes the formation of carboxymethyluridine in the wobble base at position 34 in tRNAs. Involved in cell migration. This Rattus norvegicus (Rat) protein is Elongator complex protein 5 (Elp5).